We begin with the raw amino-acid sequence, 310 residues long: Upstream stimulatory factor 1 (310 aa).

The segment covering 1–17 (MKGQQKTAETEEGTVQI) has biased composition (polar residues). 2 disordered regions span residues 1 to 26 (MKGQ…ATGE) and 171 to 209 (QGGS…EVER). A compositionally biased stretch (basic and acidic residues) spans 190–209 (EAPRTTRDEKRRAQHNEVER). A bHLH domain is found at 199–254 (KRRAQHNEVERRRRDKINNWIVQLSKIIPDCSMESTKSGQSKGGILSKACDYIQEL). The interval 271-292 (LQLDNDVLRQQVEDLKNKNLLL) is leucine-zipper. K306 is covalently cross-linked (Glycyl lysine isopeptide (Lys-Gly) (interchain with G-Cter in SUMO2)).

Efficient DNA binding requires dimerization with another bHLH protein. Binds DNA as a homodimer or a heterodimer (USF1/USF2).

Its subcellular location is the nucleus. Transcription factor that binds to a symmetrical DNA sequence (E-boxes) (5'-CACGTG-3') that is found in a variety of viral and cellular promoters. This chain is Upstream stimulatory factor 1 (USF1), found in Bos taurus (Bovine).